Reading from the N-terminus, the 309-residue chain is Virulence regulon transcriptional activator VirB (309 aa).

Residues 152–171 constitute a DNA-binding region (H-T-H motif); sequence KDIAKKENLSRAKVTRAFQA.

This sequence belongs to the ParB family.

Its function is as follows. Transcription activator for the invasion antigens IpaB, IpaC and IpaD. VirB is itself regulated by VirF. This chain is Virulence regulon transcriptional activator VirB (virB), found in Shigella flexneri.